The sequence spans 531 residues: Phosphomethylpyrimidine synthase (531 aa).

Substrate is bound by residues Asn167, Met196, Tyr225, His261, 281 to 283, 322 to 325, and Glu361; these read SRG and DALR. His365 lines the Zn(2+) pocket. Tyr388 provides a ligand contact to substrate. His429 provides a ligand contact to Zn(2+). 3 residues coordinate [4Fe-4S] cluster: Cys511, Cys514, and Cys519.

Belongs to the ThiC family. [4Fe-4S] cluster is required as a cofactor.

The catalysed reaction is 5-amino-1-(5-phospho-beta-D-ribosyl)imidazole + S-adenosyl-L-methionine = 4-amino-2-methyl-5-(phosphooxymethyl)pyrimidine + CO + 5'-deoxyadenosine + formate + L-methionine + 3 H(+). The protein operates within cofactor biosynthesis; thiamine diphosphate biosynthesis. Its function is as follows. Catalyzes the synthesis of the hydroxymethylpyrimidine phosphate (HMP-P) moiety of thiamine from aminoimidazole ribotide (AIR) in a radical S-adenosyl-L-methionine (SAM)-dependent reaction. The polypeptide is Phosphomethylpyrimidine synthase (Chlorobium chlorochromatii (strain CaD3)).